Consider the following 454-residue polypeptide: L-cysteine desulfhydrase (454 aa).

Residues 1–25 (MEAGERRNGDSMSHNHRAPKKPRLA) form a disordered region. Positions 14–23 (HNHRAPKKPR) are enriched in basic residues. Lys257 is subject to N6-(pyridoxal phosphate)lysine.

The protein belongs to the class-V pyridoxal-phosphate-dependent aminotransferase family. Pyridoxal 5'-phosphate serves as cofactor. As to expression, highly expressed in stems and cauline leaves, and at lower levels in roots, rosette leaves and flowers.

It carries out the reaction L-cysteine + H2O = hydrogen sulfide + pyruvate + NH4(+) + H(+). In terms of biological role, catalyzes the production of hydrogen sulfide (H2S) from cysteine. Is mainly responsible for the degradation of cysteine to generate H2S, a regulator of stomatal movement and closure. The sequence is that of L-cysteine desulfhydrase (LCD) from Arabidopsis thaliana (Mouse-ear cress).